Consider the following 835-residue polypeptide: Ubiquitin carboxyl-terminal hydrolase 26 (835 aa).

Positions 102 to 128 are disordered; sequence SQGSIRPARSDERCGEPSTSAQELNGS. Over residues 118 to 128 the composition is skewed to polar residues; it reads PSTSAQELNGS. Residues 286-816 enclose the USP domain; sequence QGLPNVGNTC…TGYVFFYMHN (531 aa). Cysteine 295 functions as the Nucleophile in the catalytic mechanism. Residues 597–747 are disordered; sequence NRESEAQSGK…TRKVDPTKLN (151 aa). Composition is skewed to basic and acidic residues over residues 634–652 and 669–679; these read LTKE…RPSD and KCNEGRSDKQI. Residues 683-708 show a composition bias toward polar residues; sequence ALTQSRPKPISQEQTENLGKTTLSHT. Residues 709 to 725 show a composition bias toward low complexity; it reads QDSSQSSQSSSDSSKSS. Residues 726–747 show a composition bias toward basic and acidic residues; the sequence is RCSDDLDKKAKPTRKVDPTKLN. The active-site Proton acceptor is histidine 771.

Belongs to the peptidase C19 family. As to quaternary structure, interacts with RING1.

It is found in the nucleus. It localises to the cytoplasm. The protein resides in the cytoskeleton. Its subcellular location is the flagellum axoneme. It carries out the reaction Thiol-dependent hydrolysis of ester, thioester, amide, peptide and isopeptide bonds formed by the C-terminal Gly of ubiquitin (a 76-residue protein attached to proteins as an intracellular targeting signal).. Its function is as follows. Deubiquitinase regulating several biological processes through the deubiquitination of components of these processes. Involved in somatic cell reprogramming through the 'Lys-48'-linked deubiquitination and stabilization of CBX4 and CBX6, two components of the polycomb-repressive complex 1 (PRC1). Also deubiquitinates and probably stabilizes the androgen receptor (AR), regulating the androgen receptor signaling pathway. May play a role in spermatogenesis. The sequence is that of Ubiquitin carboxyl-terminal hydrolase 26 from Mus musculus (Mouse).